The chain runs to 530 residues: Phosphoenolpyruvate carboxykinase (ATP) (530 aa).

Residues Arg-60, Tyr-195, and Lys-201 each contribute to the substrate site. Residues Lys-201, His-221, and Gly-237–Thr-245 each bind ATP. Residues Lys-201 and His-221 each contribute to the Mn(2+) site. Asp-258 lines the Mn(2+) pocket. ATP is bound by residues Glu-286, Arg-324, and Ser-449. A substrate-binding site is contributed by Arg-324.

Belongs to the phosphoenolpyruvate carboxykinase (ATP) family. The cofactor is Mn(2+).

It localises to the cytoplasm. The enzyme catalyses oxaloacetate + ATP = phosphoenolpyruvate + ADP + CO2. It functions in the pathway carbohydrate biosynthesis; gluconeogenesis. In terms of biological role, involved in the gluconeogenesis. Catalyzes the conversion of oxaloacetate (OAA) to phosphoenolpyruvate (PEP) through direct phosphoryl transfer between the nucleoside triphosphate and OAA. This is Phosphoenolpyruvate carboxykinase (ATP) from Geobacter metallireducens (strain ATCC 53774 / DSM 7210 / GS-15).